The sequence spans 250 residues: uncharacterized protein (250 aa).

Positions 1–25 are cleaved as a signal peptide; the sequence is MKTLRTLCVLMILSGVIFFGLKIDA.

This is an uncharacterized protein from Bacillus subtilis (strain 168).